Consider the following 206-residue polypeptide: Somatotropin (206 aa).

Positions 1–18 (MLDRVVVLLSVLCLGVSS) are cleaved as a signal peptide. A Pyrrolidone carboxylic acid modification is found at glutamine 19. Histidine 37 serves as a coordination point for Zn(2+). Cysteines 70 and 179 form a disulfide. Glutamate 188 is a Zn(2+) binding site. A disulfide bridge connects residues cysteine 196 and cysteine 204.

It belongs to the somatotropin/prolactin family.

The protein localises to the secreted. Its function is as follows. Growth hormone plays an important role in growth control and is involved in the regulation of several anabolic processes. Implicated as an osmoregulatory substance important for seawater adaptation. The protein is Somatotropin (gh) of Pseudocaranx dentex (White trevally).